A 414-amino-acid chain; its full sequence is 2,3-diketo-5-methylthiopentyl-1-phosphate enolase (414 aa).

The active-site Proton acceptor is K99. Residues K148, 174–177 (KDDE), H265, G338, and 360–361 (GG) each bind substrate. Residues K174, D176, and E177 each coordinate Mg(2+). The residue at position 174 (K174) is an N6-carboxylysine.

Belongs to the RuBisCO large chain family. Type IV subfamily. As to quaternary structure, homodimer. Requires Mg(2+) as cofactor.

It carries out the reaction 5-methylsulfanyl-2,3-dioxopentyl phosphate = 2-hydroxy-5-methylsulfanyl-3-oxopent-1-enyl phosphate. The protein operates within amino-acid biosynthesis; L-methionine biosynthesis via salvage pathway; L-methionine from S-methyl-5-thio-alpha-D-ribose 1-phosphate: step 3/6. In terms of biological role, catalyzes the enolization of 2,3-diketo-5-methylthiopentyl-1-phosphate (DK-MTP-1-P) into 2-hydroxy-3-keto-5-methylthiopentenyl-1-phosphate (HK-MTPenyl-1-P). This Bacillus cereus (strain Q1) protein is 2,3-diketo-5-methylthiopentyl-1-phosphate enolase.